The chain runs to 257 residues: 3-deoxy-manno-octulosonate cytidylyltransferase (257 aa).

This sequence belongs to the KdsB family.

The protein resides in the cytoplasm. The catalysed reaction is 3-deoxy-alpha-D-manno-oct-2-ulosonate + CTP = CMP-3-deoxy-beta-D-manno-octulosonate + diphosphate. It functions in the pathway nucleotide-sugar biosynthesis; CMP-3-deoxy-D-manno-octulosonate biosynthesis; CMP-3-deoxy-D-manno-octulosonate from 3-deoxy-D-manno-octulosonate and CTP: step 1/1. The protein operates within bacterial outer membrane biogenesis; lipopolysaccharide biosynthesis. Activates KDO (a required 8-carbon sugar) for incorporation into bacterial lipopolysaccharide in Gram-negative bacteria. The polypeptide is 3-deoxy-manno-octulosonate cytidylyltransferase (Stenotrophomonas maltophilia (strain K279a)).